A 280-amino-acid polypeptide reads, in one-letter code: MKKLQLLAPAKVNYRLDVLGKRPDGYHELRMIMQRVDLCDEIEIALSDSPGIRVTCGRKGVPDGPGNIAWRAADALLKLSDKEVGIEITIAKKIPVGAGLGGGSSDAATVLMGVNELLELGLTDERLMEIGVKLGADVPFFVFKKPALAEGIGDRLTALEEVPSLWVVLVNPGIHVSTAWVYQNLRLTTPDPATIIPRSYSSLNEVCELLSNDLEPVTCGRFPLVSELKEVLLTAGARGSLMSGSGSTVFGLFESESAARHAAAEIAKARGWFAAAVRTI.

Residue lysine 11 is part of the active site. An ATP-binding site is contributed by proline 95–serine 105. Residue aspartate 137 is part of the active site.

It belongs to the GHMP kinase family. IspE subfamily.

It catalyses the reaction 4-CDP-2-C-methyl-D-erythritol + ATP = 4-CDP-2-C-methyl-D-erythritol 2-phosphate + ADP + H(+). The protein operates within isoprenoid biosynthesis; isopentenyl diphosphate biosynthesis via DXP pathway; isopentenyl diphosphate from 1-deoxy-D-xylulose 5-phosphate: step 3/6. Functionally, catalyzes the phosphorylation of the position 2 hydroxy group of 4-diphosphocytidyl-2C-methyl-D-erythritol. The protein is 4-diphosphocytidyl-2-C-methyl-D-erythritol kinase of Citrifermentans bemidjiense (strain ATCC BAA-1014 / DSM 16622 / JCM 12645 / Bem) (Geobacter bemidjiensis).